The primary structure comprises 1167 residues: MEFLRGGAALLQLLLVLSISRCCSTDPDRKVCQGTSNQMTMLDNHYLKMKKMYSGCNVVLENLEITYTQENQDLSFLQSIQEVGGYVLIAMNEVSTIPLVNLRLIRGQNLYEGNFTLLVMSNYQKNPSSPDVYQVGLKQLQLSNLTEILSGGVKVSHNPLLCNVETINWWDIVDKTSNPTMNLIPHAFERQCQKCDHGCVNGSCWAPGPGHCQKFTKLLCAEQCNRRCRGPKPIDCCNEHCAGGCTGPRATDCLACRDFNDDGTCKDTCPPPKIYDIVSHQVVDNPNIKYTFGAACVKECPSNYVVTEGACVRSCSAGMLEVDENGKRSCKPCDGVCPKVCDGIGIGSLSNTIAVNSTNIRSFSNCTKINGDIILNRNSFEGDPHYKIGTMDPEHLWNLTTVKEITGYLVIMWWPENMTSLSVFQNLEIIRGRTTFSRGFSFVVVQVRHLQWLGLRSLKEVSAGNVILKNTLQLRYANTINWRRLFRSEDQSIEYDARTENQTCNNECSEDGCWGPGPTMCVSCLHVDRGGRCVASCNLLQGEPREAQVDGRCVQCHQECLVQTDSLTCYGPGPANCSKSAHFQDGPQCIPRCPHGILGDGDTLIWKYADKMGQCQPCHQNCTQGCSGPGLSGCRGDIVSHSSLAVGLVSGLLITVIVALLIVVLLRRRRIKRKRTIRCLLQEKELVEPLTPSGQAPNQAFLRILKETEFKKDRVLGSGAFGTVYKGLWNPDGENIRIPVAIKVLREATSPKVNQEVLDEAYVMASVDHPHVCRLLGICLTSAVQLVTQLMPYGCLLDYVRQHQERICGQWLLNWCVQIAKGMNYLEERHLVHRDLAARNVLLKNPNHVKITDFGLSKLLTADEKEYQADGGKVPIKWMALESILQWTYTHQSDVWSYGVTVWELMTFGSKPYDGIPAKEIASVLENGERLPQPPICTIEVYMIILKCWMIDPSSRPRFRELVGEFSQMARDPSRYLVIQGNLPSLSDRRLFSRLLSSDDDVVDADEYLLPYKRINRQGSEPCIPPTGHPVRENSITLRNISDPTQNALEKDLDGHEYVNQPGSETSSRLSDIYNPNYEDLTDGWGPVSLSSQEAETNFSRPEYLNTNQNSLPLVSSGSMDDPDYQAGYQAAFLPQTGALTGNGMFLPAAENLEYLGQGGALYTPVR.

The N-terminal stretch at Met-1–Thr-25 is a signal peptide. The Extracellular segment spans residues Asp-26–Ser-642. N-linked (GlcNAc...) asparagine glycans are attached at residues Asn-114, Asn-144, and Asn-201. Cystine bridges form between Cys-195-Cys-204, Cys-199-Cys-212, Cys-220-Cys-228, Cys-224-Cys-236, Cys-237-Cys-245, Cys-241-Cys-253, Cys-256-Cys-265, Cys-269-Cys-296, Cys-300-Cys-311, Cys-315-Cys-330, and Cys-333-Cys-337. N-linked (GlcNAc...) asparagine glycosylation is found at Asn-356, Asn-365, Asn-398, Asn-417, and Asn-501. Intrachain disulfides connect Cys-504–Cys-513, Cys-508–Cys-521, Cys-524–Cys-533, Cys-537–Cys-553, Cys-556–Cys-569, Cys-560–Cys-577, Cys-593–Cys-615, Cys-618–Cys-626, and Cys-622–Cys-634. N-linked (GlcNAc...) asparagine glycosylation occurs at Asn-576. The N-linked (GlcNAc...) asparagine glycan is linked to Asn-621. The helical transmembrane segment at Ser-643–Leu-665 threads the bilayer. Over Leu-666–Arg-1167 the chain is Cytoplasmic. The Protein kinase domain maps to Phe-710–Leu-977. ATP is bound by residues Leu-716–Val-724 and Lys-743. Asp-835 acts as the Proton acceptor in catalysis.

Belongs to the protein kinase superfamily. Tyr protein kinase family. EGF receptor subfamily.

It localises to the membrane. It catalyses the reaction L-tyrosyl-[protein] + ATP = O-phospho-L-tyrosyl-[protein] + ADP + H(+). In terms of biological role, probable receptor with tyrosine-protein kinase activity. The chain is Melanoma receptor tyrosine-protein kinase (xmrk) from Xiphophorus maculatus (Southern platyfish).